Reading from the N-terminus, the 142-residue chain is Large ribosomal subunit protein uL13 (142 aa).

Belongs to the universal ribosomal protein uL13 family. In terms of assembly, part of the 50S ribosomal subunit.

Functionally, this protein is one of the early assembly proteins of the 50S ribosomal subunit, although it is not seen to bind rRNA by itself. It is important during the early stages of 50S assembly. In Janthinobacterium sp. (strain Marseille) (Minibacterium massiliensis), this protein is Large ribosomal subunit protein uL13.